The following is a 223-amino-acid chain: Endonuclease V (223 aa).

Mg(2+)-binding residues include Asp35 and Asp103.

Belongs to the endonuclease V family. The cofactor is Mg(2+).

The protein resides in the cytoplasm. It carries out the reaction Endonucleolytic cleavage at apurinic or apyrimidinic sites to products with a 5'-phosphate.. Functionally, DNA repair enzyme involved in the repair of deaminated bases. Selectively cleaves double-stranded DNA at the second phosphodiester bond 3' to a deoxyinosine leaving behind the intact lesion on the nicked DNA. The polypeptide is Endonuclease V (Salmonella paratyphi A (strain ATCC 9150 / SARB42)).